A 950-amino-acid chain; its full sequence is 2-oxoglutarate dehydrogenase E1 component (950 aa).

Belongs to the alpha-ketoglutarate dehydrogenase family. In terms of assembly, homodimer. Part of the 2-oxoglutarate dehydrogenase (OGDH) complex composed of E1 (2-oxoglutarate dehydrogenase), E2 (dihydrolipoamide succinyltransferase) and E3 (dihydrolipoamide dehydrogenase); the complex contains multiple copies of the three enzymatic components (E1, E2 and E3). Requires thiamine diphosphate as cofactor.

It carries out the reaction N(6)-[(R)-lipoyl]-L-lysyl-[protein] + 2-oxoglutarate + H(+) = N(6)-[(R)-S(8)-succinyldihydrolipoyl]-L-lysyl-[protein] + CO2. Functionally, E1 component of the 2-oxoglutarate dehydrogenase (OGDH) complex which catalyzes the decarboxylation of 2-oxoglutarate, the first step in the conversion of 2-oxoglutarate to succinyl-CoA and CO(2). The sequence is that of 2-oxoglutarate dehydrogenase E1 component from Geobacillus kaustophilus (strain HTA426).